Here is a 262-residue protein sequence, read N- to C-terminus: Phosphoribosyl 1,2-cyclic phosphate 1,2-diphosphodiesterase (262 aa).

His6, His8, Asp13, His38, Glu63, His76, His193, Asp245, and His247 together coordinate Mn(2+).

It belongs to the PHP family. The cofactor is Mn(2+).

The enzyme catalyses alpha-D-ribose 1,2-cyclic phosphate 5-phosphate + H2O = D-ribose 2,5-bisphosphate + H(+). It catalyses the reaction D-ribose 2,5-bisphosphate + H2O = D-ribose 5-phosphate + phosphate. Its function is as follows. Involved in degradation of methylphosphonate. Catalyzes the hydrolysis of the phosphate ester at carbon-1 of 5-phospho-D-ribose 1,2-cyclic phosphate to form ribose 2,5-bisphosphate. This intermediate is then hydrolyzed to ribose-5-phosphate and inorganic phosphate. The polypeptide is Phosphoribosyl 1,2-cyclic phosphate 1,2-diphosphodiesterase (Eggerthella lenta (strain ATCC 25559 / DSM 2243 / CCUG 17323 / JCM 9979 / KCTC 3265 / NCTC 11813 / VPI 0255 / 1899 B) (Eubacterium lentum)).